The following is a 245-amino-acid chain: MTETKTLVLIPARMAATRLPGKPLMDIAGLPMIVHVLRRAEAAAIGPVAVATDTAEIADVVTAHGGRVVMTRADHPSGSDRIFEALSKLDPDGAVETVVNLQGDFPTIQPDNIRAVLEPLADPAVDIATLAAQIHTEEESLNPNVVKVIGSPLGDRRLRALYFTRATAPWGDGPRYHHIGLYAYRRAALQRFVSLPPSPLERREKLEQLRALEAGMRIDVGIVDAVPRGVDTAADLETARRVLAH.

The protein belongs to the KdsB family.

It localises to the cytoplasm. It catalyses the reaction 3-deoxy-alpha-D-manno-oct-2-ulosonate + CTP = CMP-3-deoxy-beta-D-manno-octulosonate + diphosphate. It participates in nucleotide-sugar biosynthesis; CMP-3-deoxy-D-manno-octulosonate biosynthesis; CMP-3-deoxy-D-manno-octulosonate from 3-deoxy-D-manno-octulosonate and CTP: step 1/1. The protein operates within bacterial outer membrane biogenesis; lipopolysaccharide biosynthesis. In terms of biological role, activates KDO (a required 8-carbon sugar) for incorporation into bacterial lipopolysaccharide in Gram-negative bacteria. The polypeptide is 3-deoxy-manno-octulosonate cytidylyltransferase (Rhodopseudomonas palustris (strain BisB18)).